The primary structure comprises 158 residues: Arginine repressor (158 aa).

The protein belongs to the ArgR family.

The protein resides in the cytoplasm. It functions in the pathway amino-acid biosynthesis; L-arginine biosynthesis [regulation]. Regulates arginine biosynthesis genes. The protein is Arginine repressor of Phocaeicola vulgatus (strain ATCC 8482 / DSM 1447 / JCM 5826 / CCUG 4940 / NBRC 14291 / NCTC 11154) (Bacteroides vulgatus).